A 346-amino-acid chain; its full sequence is D-alanine--D-alanine ligase (346 aa).

Residues 133–327 (KLYAKSVGVK…ALADQISLEK (195 aa)) enclose the ATP-grasp domain. ATP is bound at residue 159-211 (LSFPCIIKPARLGSSIGISIVKDEKDLEYAKDVGFEFDNDLVVEEFKNNIKEY). 3 residues coordinate Mg(2+): Asp-284, Glu-296, and Asn-298.

Belongs to the D-alanine--D-alanine ligase family. Requires Mg(2+) as cofactor. The cofactor is Mn(2+).

It localises to the cytoplasm. The enzyme catalyses 2 D-alanine + ATP = D-alanyl-D-alanine + ADP + phosphate + H(+). The protein operates within cell wall biogenesis; peptidoglycan biosynthesis. Its function is as follows. Cell wall formation. In Campylobacter jejuni subsp. jejuni serotype O:6 (strain 81116 / NCTC 11828), this protein is D-alanine--D-alanine ligase.